A 586-amino-acid chain; its full sequence is Transcription elongation regulator 1-like protein (586 aa).

A disordered region spans residues 1–30; that stretch reads MQAGARFQRRRRQLQQQQPRRRQPLLWPMD. A compositionally biased stretch (basic residues) spans 7–23; sequence FQRRRRQLQQQQPRRRQ. The WW 1 domain maps to 148–181; sequence TPIGKSWIDKRIPNCKIFFNNSFALDSTWIHPEE. Disordered regions lie at residues 281–344 and 378–448; these read TSPV…PGSP and DLNR…QILL. Over residues 306–317 the composition is skewed to basic and acidic residues; the sequence is KSRDGDKEDKEP. Residues 339 to 372 form the WW 2 domain; that stretch reads PVPGSPWCVVWTGDDRVFFFNPTMHLSVWEKPMD. Composition is skewed to basic and acidic residues over residues 378-387, 411-421, and 428-439; these read DLNRIIEDPP, DQDVKTKRNRT, and KPEEAKREDKGT. 2 consecutive FF domains span residues 450–503 and 515–570; these read LEER…FVKT and KLLL…FILI.

The protein is Transcription elongation regulator 1-like protein (TCERG1L) of Homo sapiens (Human).